A 704-amino-acid chain; its full sequence is mRNA (2'-O-methyladenosine-N(6)-)-methyltransferase (704 aa).

A disordered region spans residues 1–33; sequence MANENHGSPREEASLLSHSPGTSNQSQPCSPKP. Polar residues predominate over residues 16–29; the sequence is LSHSPGTSNQSQPC. At serine 30 the chain carries Phosphoserine. The WW domain occupies 43–77; it reads ELVHAGWEKCWSRRENRPYYFNRFTNQSLWEMPVL. Residues 88 to 151 are disordered; that stretch reads GLNATPLPQD…PSSPSIPGTP (64 aa). Residues 109 to 113 carry the Nuclear localization signal motif; the sequence is KPRKR. Serine 116 is subject to Phosphoserine. Positions 136 to 149 are enriched in polar residues; sequence PTGQSVPSSPSIPG. Threonine 152 bears the Phosphothreonine mark. Substrate is bound by residues arginine 235 and arginine 265. An S-adenosyl-L-methionine-binding site is contributed by 553 to 556; that stretch reads NPPF. Residues glutamate 558 and 588 to 592 each bind substrate; that span reads WREPP. An S-adenosyl-L-methionine-binding site is contributed by 614-616; it reads FEH. The interval 663–704 is disordered; sequence LSAAYRQSGRSHSSGSSSSSSSEAKDRDSGREQGPSREPHPT. Positions 669–684 match the Nuclear localization signal motif; that stretch reads QSGRSHSSGSSSSSSS. Residues 670 to 684 show a composition bias toward low complexity; that stretch reads SGRSHSSGSSSSSSS. Residues 685–704 are compositionally biased toward basic and acidic residues; sequence EAKDRDSGREQGPSREPHPT.

This sequence belongs to the CAPAM family. In terms of assembly, interacts with POLR2A; interacts with the phosphorylated C-terminal domain (CTD) of POLR2A. Ubiquitous.

It localises to the nucleus. It catalyses the reaction a 5'-end (N(7)-methyl 5'-triphosphoguanosine)-(2'-O-methyladenosine) in mRNA + S-adenosyl-L-methionine = a 5'-end (N(7)-methyl 5'-triphosphoguanosine)-(N(6),2'-O-dimethyladenosine) in mRNA + S-adenosyl-L-homocysteine + H(+). With respect to regulation, cap-specific adenosine methyltransferase activity is inhibited by zinc. Functionally, cap-specific adenosine methyltransferase that catalyzes formation of N(6),2'-O-dimethyladenosine cap (m6A(m)) by methylating the adenosine at the second transcribed position of capped mRNAs. Recruited to the early elongation complex of RNA polymerase II (RNAPII) via interaction with POLR2A and mediates formation of m6A(m) co-transcriptionally. The protein is mRNA (2'-O-methyladenosine-N(6)-)-methyltransferase of Homo sapiens (Human).